The following is a 446-amino-acid chain: Histidine--tRNA ligase (446 aa).

It belongs to the class-II aminoacyl-tRNA synthetase family. Homodimer.

The protein resides in the cytoplasm. It catalyses the reaction tRNA(His) + L-histidine + ATP = L-histidyl-tRNA(His) + AMP + diphosphate + H(+). This is Histidine--tRNA ligase from Burkholderia cenocepacia (strain ATCC BAA-245 / DSM 16553 / LMG 16656 / NCTC 13227 / J2315 / CF5610) (Burkholderia cepacia (strain J2315)).